A 936-amino-acid polypeptide reads, in one-letter code: Protein SIEL (936 aa).

Interacts with SHR, MGP, SCR, JKD, CPC, TMO7 and AGL21, but not with LFY or STM.

It localises to the nucleus. Its subcellular location is the endosome. The protein resides in the cytoplasm. It is found in the cell cortex. Functionally, intracellular shuttle that promotes movement of SHR from the stele into the endodermis. Required for SHR association to endosomes and localization, and for intercellular movement of SHR. The protein is Protein SIEL of Arabidopsis thaliana (Mouse-ear cress).